The following is a 263-amino-acid chain: Small ribosomal subunit protein uS3 (263 aa).

Residues 40–108 (IRNYLFKKFH…HIKVDVDVLE (69 aa)) enclose the KH type-2 domain. The segment at 224–263 (KPKGSEANHQRRNSNKSKDYRDNKNKQFNKNHQNQQPAKE) is disordered. Residues 239–248 (KSKDYRDNKN) are compositionally biased toward basic and acidic residues. The segment covering 249-263 (KQFNKNHQNQQPAKE) has biased composition (low complexity).

Belongs to the universal ribosomal protein uS3 family. As to quaternary structure, part of the 30S ribosomal subunit. Forms a tight complex with proteins S10 and S14.

Binds the lower part of the 30S subunit head. Binds mRNA in the 70S ribosome, positioning it for translation. The sequence is that of Small ribosomal subunit protein uS3 from Mycoplasmoides gallisepticum (strain R(low / passage 15 / clone 2)) (Mycoplasma gallisepticum).